We begin with the raw amino-acid sequence, 183 residues long: NADH-ubiquinone oxidoreductase chain 5 (183 aa).

4 consecutive transmembrane segments (helical) span residues 7 to 27 (FMCY…GDNS), 30 to 50 (LFLG…FWFT), 111 to 131 (AITL…AQIG), and 144 to 164 (TPVS…FMIA).

The protein belongs to the complex I subunit 5 family.

The protein localises to the mitochondrion inner membrane. It carries out the reaction a ubiquinone + NADH + 5 H(+)(in) = a ubiquinol + NAD(+) + 4 H(+)(out). In terms of biological role, core subunit of the mitochondrial membrane respiratory chain NADH dehydrogenase (Complex I) that is believed to belong to the minimal assembly required for catalysis. Complex I functions in the transfer of electrons from NADH to the respiratory chain. The immediate electron acceptor for the enzyme is believed to be ubiquinone. The protein is NADH-ubiquinone oxidoreductase chain 5 (NDH5) of Pisum sativum (Garden pea).